Here is a 365-residue protein sequence, read N- to C-terminus: Chorismate synthase (365 aa).

An NADP(+)-binding site is contributed by Arg-48. FMN is bound by residues Arg-125–Ser-127, Gly-286, Lys-301–Ser-305, and Arg-328.

It belongs to the chorismate synthase family. FMNH2 serves as cofactor.

It carries out the reaction 5-O-(1-carboxyvinyl)-3-phosphoshikimate = chorismate + phosphate. Its pathway is metabolic intermediate biosynthesis; chorismate biosynthesis; chorismate from D-erythrose 4-phosphate and phosphoenolpyruvate: step 7/7. Its function is as follows. Catalyzes the anti-1,4-elimination of the C-3 phosphate and the C-6 proR hydrogen from 5-enolpyruvylshikimate-3-phosphate (EPSP) to yield chorismate, which is the branch point compound that serves as the starting substrate for the three terminal pathways of aromatic amino acid biosynthesis. This reaction introduces a second double bond into the aromatic ring system. The polypeptide is Chorismate synthase (Methanosphaera stadtmanae (strain ATCC 43021 / DSM 3091 / JCM 11832 / MCB-3)).